An 889-amino-acid chain; its full sequence is Protein argonaute 15 (889 aa).

Disordered regions lie at residues 1 to 26 and 119 to 150; these read MESH…SRKG and EDAS…RMKR. The segment covering 122 to 132 has biased composition (low complexity); sequence SSSGRTTTRRS. The PAZ domain maps to 264-379; that stretch reads PVIEFLLFNQ…IPLELCHLVP (116 aa). In terms of domain architecture, Piwi spans 546–853; it reads FVLCVLPERK…AAAQVSQFVR (308 aa). The disordered stretch occupies residues 857–878; it reads AASEGSGDGGAPPRPVPELPRL.

Belongs to the argonaute family. Ago subfamily.

In terms of biological role, probably involved in the RNA silencing pathway. May bind to short RNAs such as microRNAs (miRNAs) or short interfering RNAs (siRNAs), and represses the translation of mRNAs which are complementary to them. The protein is Protein argonaute 15 (AGO15) of Oryza sativa subsp. japonica (Rice).